Here is a 149-residue protein sequence, read N- to C-terminus: MADQLTDDQIAEFKEAFSLFDKDGDGCITTKELGTVMRSLGQNPTEAELQDMINEVDADGNGTIDFPEFLNLMARKMKDTDSEEELKEAFRVFDKDQNGFISAAELRHVMTNLGEKLTDEEVEEMIREADVDGDGQINYDEFVKVMMAK.

Residue alanine 2 is modified to N-acetylalanine. EF-hand domains follow at residues aspartate 8–asparagine 43, proline 44–aspartate 79, aspartate 81–lysine 116, and leucine 117–lysine 149. Ca(2+)-binding residues include aspartate 21, aspartate 23, aspartate 25, cysteine 27, glutamate 32, aspartate 57, aspartate 59, asparagine 61, threonine 63, glutamate 68, aspartate 94, aspartate 96, asparagine 98, and glutamate 105. An N6,N6,N6-trimethyllysine modification is found at lysine 116. Residues aspartate 130, aspartate 132, aspartate 134, glutamine 136, and glutamate 141 each coordinate Ca(2+).

The protein belongs to the calmodulin family.

Calmodulin mediates the control of a large number of enzymes, ion channels and other proteins by Ca(2+). Among the enzymes to be stimulated by the calmodulin-Ca(2+) complex are a number of protein kinases and phosphatases. This is Calmodulin-3 (CAM3) from Oryza sativa subsp. japonica (Rice).